The following is a 193-amino-acid chain: Putative 3-methyladenine DNA glycosylase (193 aa).

It belongs to the DNA glycosylase MPG family.

The chain is Putative 3-methyladenine DNA glycosylase from Francisella tularensis subsp. holarctica (strain FTNF002-00 / FTA).